Reading from the N-terminus, the 316-residue chain is Thymidylate synthase (316 aa).

DUMP-binding positions include Arg23 and 178–179 (RR). Cys198 (nucleophile) is an active-site residue. DUMP contacts are provided by residues 218–221 (RSAD), Asn229, and 259–261 (HLY). Asp221 contributes to the (6R)-5,10-methylene-5,6,7,8-tetrahydrofolate binding site. (6R)-5,10-methylene-5,6,7,8-tetrahydrofolate is bound at residue Ala315.

This sequence belongs to the thymidylate synthase family. Bacterial-type ThyA subfamily. In terms of assembly, homodimer.

It is found in the cytoplasm. The catalysed reaction is dUMP + (6R)-5,10-methylene-5,6,7,8-tetrahydrofolate = 7,8-dihydrofolate + dTMP. It functions in the pathway pyrimidine metabolism; dTTP biosynthesis. In terms of biological role, catalyzes the reductive methylation of 2'-deoxyuridine-5'-monophosphate (dUMP) to 2'-deoxythymidine-5'-monophosphate (dTMP) while utilizing 5,10-methylenetetrahydrofolate (mTHF) as the methyl donor and reductant in the reaction, yielding dihydrofolate (DHF) as a by-product. This enzymatic reaction provides an intracellular de novo source of dTMP, an essential precursor for DNA biosynthesis. In Lacticaseibacillus paracasei (strain ATCC 334 / BCRC 17002 / CCUG 31169 / CIP 107868 / KCTC 3260 / NRRL B-441) (Lactobacillus paracasei), this protein is Thymidylate synthase.